We begin with the raw amino-acid sequence, 115 residues long: Non-specific lipid-transfer protein 3 (115 aa).

A signal peptide spans 1–23 (MAFALRFFTCLVLTVCIVASVDA). Intrachain disulfides connect cysteine 27–cysteine 74, cysteine 37–cysteine 51, cysteine 52–cysteine 97, and cysteine 72–cysteine 111.

This sequence belongs to the plant LTP family.

Functionally, plant non-specific lipid-transfer proteins transfer phospholipids as well as galactolipids across membranes. May play a role in wax or cutin deposition in the cell walls of expanding epidermal cells and certain secretory tissues. This is Non-specific lipid-transfer protein 3 (LTP3) from Arabidopsis thaliana (Mouse-ear cress).